Reading from the N-terminus, the 57-residue chain is Large ribosomal subunit protein bL32 (57 aa).

The interval 1–23 is disordered; sequence MAVPKKRTSKTRTNRRRAQKKAR.

This sequence belongs to the bacterial ribosomal protein bL32 family.

This is Large ribosomal subunit protein bL32 from Natranaerobius thermophilus (strain ATCC BAA-1301 / DSM 18059 / JW/NM-WN-LF).